We begin with the raw amino-acid sequence, 540 residues long: O-phosphoserine--tRNA(Cys) ligase (540 aa).

Residues 188–190, 233–235, 275–276, and Asn319 contribute to the substrate site; these read HMT, SAS, and YY.

The protein belongs to the class-II aminoacyl-tRNA synthetase family. O-phosphoseryl-tRNA(Cys) synthetase subfamily. As to quaternary structure, homotetramer. Interacts with SepCysS.

It carries out the reaction tRNA(Cys) + O-phospho-L-serine + ATP = O-phospho-L-seryl-tRNA(Cys) + AMP + diphosphate. Catalyzes the attachment of O-phosphoserine (Sep) to tRNA(Cys). This Methanococcus aeolicus (strain ATCC BAA-1280 / DSM 17508 / OCM 812 / Nankai-3) protein is O-phosphoserine--tRNA(Cys) ligase.